The primary structure comprises 297 residues: Large ribosomal subunit protein uL18 (297 aa).

Gly2 carries the N-acetylglycine modification. An N6-acetyllysine mark is found at Lys5 and Lys48. Residue Ser185 is modified to Phosphoserine. An N6-acetyllysine; alternate modification is found at Lys220. A Glycyl lysine isopeptide (Lys-Gly) (interchain with G-Cter in SUMO1); alternate cross-link involves residue Lys220. Lys220 participates in a covalent cross-link: Glycyl lysine isopeptide (Lys-Gly) (interchain with G-Cter in SUMO2); alternate. Thr232 is subject to Phosphothreonine. Residues 253–297 form a disordered region; that stretch reads YEKKPKREVKKKRWNRPKMSLAQKKDRVAQKKASFLRAQERAAES. Positions 258–268 are enriched in basic residues; the sequence is KREVKKKRWNR. Ser272 is subject to Phosphoserine.

The protein belongs to the universal ribosomal protein uL18 family. As to quaternary structure, component of the large ribosomal subunit (LSU). Part of the 5S RNP complex, which is a LSU subcomplex composed of the 5S RNA, RPL5 and RPL11. Component of a hexameric 5S RNP precursor complex, composed of 5S RNA, RRS1, RPF2/BXDC1, RPL5, RPL11 and HEATR3; this complex acts as a precursor for ribosome assembly. Interacts with NVL in an ATP-dependent manner. Interacts with RRP1B. Interacts with IPO5, IPO7 and KPNB1; these interactions may be involved in RPL5 nuclear import for the assembly of ribosomal subunits. Interacts with RRP1B.

It is found in the cytoplasm. Its subcellular location is the nucleus. The protein localises to the nucleolus. Its function is as follows. Component of the ribosome, a large ribonucleoprotein complex responsible for the synthesis of proteins in the cell. The small ribosomal subunit (SSU) binds messenger RNAs (mRNAs) and translates the encoded message by selecting cognate aminoacyl-transfer RNA (tRNA) molecules. The large subunit (LSU) contains the ribosomal catalytic site termed the peptidyl transferase center (PTC), which catalyzes the formation of peptide bonds, thereby polymerizing the amino acids delivered by tRNAs into a polypeptide chain. The nascent polypeptides leave the ribosome through a tunnel in the LSU and interact with protein factors that function in enzymatic processing, targeting, and the membrane insertion of nascent chains at the exit of the ribosomal tunnel. As part of the 5S RNP/5S ribonucleoprotein particle it is an essential component of the LSU, required for its formation and the maturation of rRNAs. It also couples ribosome biogenesis to p53/TP53 activation. As part of the 5S RNP it accumulates in the nucleoplasm and inhibits MDM2, when ribosome biogenesis is perturbed, mediating the stabilization and the activation of TP53. This chain is Large ribosomal subunit protein uL18 (Rpl5), found in Rattus norvegicus (Rat).